The sequence spans 304 residues: MPELALLEEVVEKVRPLLGQGKVADYIPALASVDAGKIGIAVTTVDGETLGAGDYLEPFSIQSISKVFSLTLALTLYEEAEIWSRVGKEPSGHSFNSLVQVELERGKPRNPFINAGALVIADLLQSRLGAPKHRMLELVRQLSQNDKVCFDKQVADSEYQHSARNAAIAYLMKSFGNFQGDVDTVLRTYFHYCALKMNCADLSKAMLYLANRGKSITGTELISQVQTRQLNALLATSGLYDGAGEFAYRVGMPGKSGVGGGIIAVIPGELSICVWSPELDGNGNSLAGTAMLEHLSQRLGRSIF.

Substrate-binding residues include serine 63, asparagine 114, glutamate 158, asparagine 165, tyrosine 189, tyrosine 240, and valine 258.

This sequence belongs to the glutaminase family. Homotetramer.

It carries out the reaction L-glutamine + H2O = L-glutamate + NH4(+). The polypeptide is Glutaminase (Shewanella baltica (strain OS155 / ATCC BAA-1091)).